A 293-amino-acid chain; its full sequence is tRNA (guanine(9)-N1)-methyltransferase (293 aa).

Residues 1-31 (MSNDEINQNEEKVKRTPPLPPVPEGMSKKQW) form a disordered region. Thr-16 is subject to Phosphothreonine. Residues 32-61 (KKMCKRQRWEENKAKYNAERRVKKKRLRHE) are a coiled coil. An SAM-dependent MTase TRM10-type domain is found at 83-279 (EPRINVNQTD…SVLPPRKLDA (197 aa)). S-adenosyl-L-methionine-binding positions include 186-187 (LT), Gly-206, 210-214 (DKNRY), Cys-218, Leu-232, and 244-246 (RVL). The active-site Proton acceptor is the Asp-210. Ser-283 is subject to Phosphoserine.

This sequence belongs to the class IV-like SAM-binding methyltransferase superfamily. TRM10 family. In terms of assembly, monomer.

The protein localises to the cytoplasm. Its subcellular location is the nucleus. It carries out the reaction guanosine(9) in tRNA + S-adenosyl-L-methionine = N(1)-methylguanosine(9) in tRNA + S-adenosyl-L-homocysteine + H(+). Its function is as follows. S-adenosyl-L-methionine-dependent guanine N(1)-methyltransferase that catalyzes the formation of N(1)-methylguanine at position 9 (m1G9) in cytoplasmic tRNAs. In Saccharomyces cerevisiae (strain ATCC 204508 / S288c) (Baker's yeast), this protein is tRNA (guanine(9)-N1)-methyltransferase.